The chain runs to 304 residues: Acetaldehyde dehydrogenase 1 (304 aa).

Cys-131 serves as the catalytic Acyl-thioester intermediate. NAD(+)-binding positions include 162–170 and Asn-273; that span reads SAGPGTRKN.

This sequence belongs to the acetaldehyde dehydrogenase family.

It catalyses the reaction acetaldehyde + NAD(+) + CoA = acetyl-CoA + NADH + H(+). This Dechloromonas aromatica (strain RCB) protein is Acetaldehyde dehydrogenase 1.